Consider the following 278-residue polypeptide: S-formylglutathione hydrolase YeiG (278 aa).

Catalysis depends on charge relay system residues S145, D223, and H256.

This sequence belongs to the esterase D family.

The catalysed reaction is S-formylglutathione + H2O = formate + glutathione + H(+). Its function is as follows. Serine hydrolase involved in the detoxification of formaldehyde. Hydrolyzes S-formylglutathione to glutathione and formate. In Shigella dysenteriae serotype 1 (strain Sd197), this protein is S-formylglutathione hydrolase YeiG (yeiG).